We begin with the raw amino-acid sequence, 379 residues long: Armadillo repeat-containing X-linked protein 3 (379 aa).

At 1–6 (MGYARK) the chain is on the mitochondrial intermembrane side. Mitochondrion outer membrane (MOM)-targeting sequence stretches follow at residues 1–6 (MGYARK) and 26–37 (RLTRGRKQNKEK). A helical; Signal-anchor membrane pass occupies residues 7–29 (VGWVTAGLVIGAGACYCIYRLTR). At 30-379 (GRKQNKEKMA…AEHMFPKSQE (350 aa)) the chain is on the cytoplasmic side. S61, S67, and S72 each carry phosphoserine. The nuclear localization signal stretch occupies residues 89-98 (RARARARARA). Position 110 is a phosphoserine (S110). ARM repeat units lie at residues 111 to 151 (PNSD…NNAA), 153 to 192 (AFNR…NLSV), and 233 to 272 (VTNE…NLAE).

The protein belongs to the eutherian X-chromosome-specific Armcx family. In terms of assembly, interacts (via ARM domain) with MIRO1, MIRO2 and TRAK2. The interaction with Miro is calcium-dependent. Interacts with SOX10.

It localises to the mitochondrion outer membrane. The protein resides in the cytoplasm. It is found in the nucleus. In terms of biological role, regulates mitochondrial aggregation and transport in axons in living neurons. May link mitochondria to the TRAK2-kinesin motor complex via its interaction with Miro and TRAK2. Mitochondrial distribution and dynamics is regulated through ARMCX3 protein degradation, which is promoted by PCK and negatively regulated by WNT1. Enhances the SOX10-mediated transactivation of the neuronal acetylcholine receptor subunit alpha-3 and beta-4 subunit gene promoters. This Pongo abelii (Sumatran orangutan) protein is Armadillo repeat-containing X-linked protein 3 (ARMCX3).